We begin with the raw amino-acid sequence, 310 residues long: Cytosolic Fe-S cluster assembly factor Nubp1 homolog (310 aa).

Cys9, Cys23, Cys26, and Cys32 together coordinate [4Fe-4S] cluster. 63–70 provides a ligand contact to ATP; sequence GKGGVGKS. 2 residues coordinate [4Fe-4S] cluster: Cys240 and Cys243.

It belongs to the Mrp/NBP35 ATP-binding proteins family. NUBP1/NBP35 subfamily. Heterotetramer of 2 Nubp1 and 2 Nubp2 chains. Requires [4Fe-4S] cluster as cofactor.

The protein localises to the cytoplasm. Functionally, component of the cytosolic iron-sulfur (Fe/S) protein assembly (CIA) machinery. Required for maturation of extramitochondrial Fe-S proteins. The Nubp1-Nubp2 heterotetramer forms a Fe-S scaffold complex, mediating the de novo assembly of an Fe-S cluster and its transfer to target apoproteins. This is Cytosolic Fe-S cluster assembly factor Nubp1 homolog from Drosophila mojavensis (Fruit fly).